We begin with the raw amino-acid sequence, 65 residues long: Large ribosomal subunit protein uL29 (65 aa).

The disordered stretch occupies residues 30–49 (ERSSVAMGGAPSSPGKMRSI).

The protein belongs to the universal ribosomal protein uL29 family.

This Picrophilus torridus (strain ATCC 700027 / DSM 9790 / JCM 10055 / NBRC 100828 / KAW 2/3) protein is Large ribosomal subunit protein uL29.